A 193-amino-acid chain; its full sequence is Rho-related protein racF2 (193 aa).

10–17 (GDGAVGKT) contacts GTP. Positions 32–40 (YLPTVFDNY) match the Effector region motif. Residues 57-61 (DTAGQ) and 115-118 (TKQD) each bind GTP. A Cysteine methyl ester modification is found at cysteine 190. The S-geranylgeranyl cysteine moiety is linked to residue cysteine 190. The propeptide at 191–193 (TIM) is removed in mature form.

The protein belongs to the small GTPase superfamily. Rho family.

It localises to the cell membrane. This is Rho-related protein racF2 (racF2) from Dictyostelium discoideum (Social amoeba).